Here is a 133-residue protein sequence, read N- to C-terminus: MGQLRIKDKSQRDGYKPNQSIAILRYAHISPLKARLVLREIQGKDVGDALYLLAVIPKKAARIAEKVLKSVIANAEQKGLDLDRLYIKKAVADDGPILKKWIPRAHGRATMVRKRLSHITIVLEEKPEGKEEE.

It belongs to the universal ribosomal protein uL22 family. As to quaternary structure, part of the 50S ribosomal subunit.

Its function is as follows. This protein binds specifically to 23S rRNA; its binding is stimulated by other ribosomal proteins, e.g. L4, L17, and L20. It is important during the early stages of 50S assembly. It makes multiple contacts with different domains of the 23S rRNA in the assembled 50S subunit and ribosome. In terms of biological role, the globular domain of the protein is located near the polypeptide exit tunnel on the outside of the subunit, while an extended beta-hairpin is found that lines the wall of the exit tunnel in the center of the 70S ribosome. The protein is Large ribosomal subunit protein uL22 of Aquifex aeolicus (strain VF5).